The sequence spans 300 residues: Free fatty acid receptor 1 (300 aa).

The Extracellular segment spans residues 1–8; that stretch reads MDLPPQLS. A helical membrane pass occupies residues 9–31; that stretch reads FALYVSAFALGFPLNLLAIRGAV. Residues 32-41 lie on the Cytoplasmic side of the membrane; that stretch reads SHAKLRLTPS. Residues 42–64 form a helical membrane-spanning segment; sequence LVYTLHLGCSDLLLAITLPLKAV. The Extracellular portion of the chain corresponds to 65-79; that stretch reads EALASGAWPLPLPFC. A disulfide bridge links Cys79 with Cys170. A helical transmembrane segment spans residues 80–101; it reads PVFALAHFAPLYAGGGFLAALS. The Cytoplasmic portion of the chain corresponds to 102–121; it reads AGRYLGAAFPFGYQAIRRPR. A helical membrane pass occupies residues 122-142; it reads YSWGVCVAIWALVLCHLGLAL. Over 143 to 178 the chain is Extracellular; the sequence is GLETSGSWLDNSTSSLGINIPVNGSPVCLEAWDPDS. An N-linked (GlcNAc...) asparagine glycan is attached at Asn153. Residues 179 to 200 traverse the membrane as a helical segment; that stretch reads ARPARLSFSILLFFLPLVITAF. The Cytoplasmic portion of the chain corresponds to 201 to 223; the sequence is CYVGCLRALVRSGLSHKRKLRAA. Residues 224–248 traverse the membrane as a helical segment; it reads WVAGGALLTLLLCLGPYNASNVASF. Residues 249 to 256 lie on the Extracellular side of the membrane; that stretch reads INPDLGGS. Residues 257–279 traverse the membrane as a helical segment; sequence WRKLGLITGAWSVVLNPLVTGYL. The Cytoplasmic segment spans residues 280–300; the sequence is GTGPGRGTICVTRTQRGTIQK.

This sequence belongs to the G-protein coupled receptor 1 family. In terms of tissue distribution, expressed in pancreatic islet beta cells (at protein level). Expressed in pancreatic islet beta cells.

The protein localises to the cell membrane. With respect to regulation, is also activated by synthetic agonists, such as AM-8182, AM-6331 and TAK-875 (fasiglifam). AM-8182 is a full agonist, while AM-6331 and TAK-875 (fasiglifam) are partial agonists that potentiate the activity of the endogenous ligands, such as alpha-linolenic acid and gamma-linolenic acid. G-protein coupled receptor for medium and long chain saturated and unsaturated fatty acids that plays an important role in glucose homeostasis. Fatty acid binding increases glucose-stimulated insulin secretion, and may also enhance the secretion of glucagon-like peptide 1 (GLP-1). May also play a role in bone homeostasis; receptor signaling activates pathways that inhibit osteoclast differentiation. Ligand binding leads to a conformation change that triggers signaling via G-proteins that activate phospholipase C, leading to an increase of the intracellular calcium concentration. Seems to act through a G(q) and G(i)-mediated pathway. Mediates the anti-inflammatory effects of omega-3 polyunsaturated fatty acids (PUFAs) via inhibition of NLRP3 inflammasome activation. The protein is Free fatty acid receptor 1 (Ffar1) of Mus musculus (Mouse).